A 227-amino-acid chain; its full sequence is uncharacterized protein (227 aa).

This is an uncharacterized protein from Haemophilus influenzae (Bacteriophage HP1).